The chain runs to 242 residues: Ribosomal RNA small subunit methyltransferase G (242 aa).

S-adenosyl-L-methionine-binding positions include Gly78, Leu83, 130–131 (AE), and Arg151.

The protein belongs to the methyltransferase superfamily. RNA methyltransferase RsmG family.

The protein resides in the cytoplasm. Functionally, specifically methylates the N7 position of guanine in position 518 of 16S rRNA. In Salinispora tropica (strain ATCC BAA-916 / DSM 44818 / JCM 13857 / NBRC 105044 / CNB-440), this protein is Ribosomal RNA small subunit methyltransferase G.